A 566-amino-acid polypeptide reads, in one-letter code: Transcription factor P14E8.02 (566 aa).

Residues 1–32 form a disordered region; sequence MNISSQNVLLPSPIPSSSPMASHKKSWLSKHP. Serine 73 carries the phosphoserine modification. Residues 86–137 form the FHA domain; the sequence is NKIGRSSQQCDHVLSTVDKAISRVHAIVTCTQDRMIIECVGWNGMIVSDKMR. Disordered regions lie at residues 191–217, 269–291, 312–334, and 364–437; these read EENR…SQDY, DCSK…LLNG, ESDD…IEES, and FTNH…TKEN. A compositionally biased stretch (acidic residues) spans 314–330; sequence DDLDKNEEISEGEEYTP. Polar residues-rich tracts occupy residues 373 to 383 and 414 to 428; these read NSNITTSNDSP and DENT…PSSH. 2 positions are modified to phosphoserine: serine 379 and serine 382.

The protein belongs to the PLM2/TOS4 family.

It localises to the nucleus. In terms of biological role, probable transcriptional regulatory protein Required for G1/S progression. This chain is Transcription factor P14E8.02, found in Schizosaccharomyces pombe (strain 972 / ATCC 24843) (Fission yeast).